Reading from the N-terminus, the 298-residue chain is Protoheme IX farnesyltransferase (298 aa).

Transmembrane regions (helical) follow at residues 23 to 43 (LLLL…GKPY), 47 to 67 (LVVL…NMYF), 93 to 113 (VFIA…RIIN), 115 to 135 (HFAL…TYLL), 143 to 163 (IIAG…AAAG), 169 to 189 (ALLF…FLAT), 211 to 231 (IAVA…IVGL), 236 to 256 (VIGT…FHLA), and 278 to 298 (MMLG…YIIS).

Belongs to the UbiA prenyltransferase family. Protoheme IX farnesyltransferase subfamily.

It is found in the cell membrane. It carries out the reaction heme b + (2E,6E)-farnesyl diphosphate + H2O = Fe(II)-heme o + diphosphate. It participates in porphyrin-containing compound metabolism; heme O biosynthesis; heme O from protoheme: step 1/1. Functionally, converts heme B (protoheme IX) to heme O by substitution of the vinyl group on carbon 2 of heme B porphyrin ring with a hydroxyethyl farnesyl side group. The sequence is that of Protoheme IX farnesyltransferase from Hyperthermus butylicus (strain DSM 5456 / JCM 9403 / PLM1-5).